The sequence spans 30 residues: Scolopendra 20528.11 Da toxin (30 aa).

The protein belongs to the CRISP family. Venom allergen 5-like subfamily. In terms of processing, contains 3 disulfide bonds. As to expression, expressed by the venom gland.

It localises to the secreted. This is Scolopendra 20528.11 Da toxin from Scolopendra angulata (Barbados giant red centipede).